A 90-amino-acid chain; its full sequence is Acylphosphatase (90 aa).

The 86-residue stretch at 3 to 88 (TWHMTAHGRV…GKFEDFDLRP (86 aa)) folds into the Acylphosphatase-like domain. Active-site residues include R18 and N36.

This sequence belongs to the acylphosphatase family.

It carries out the reaction an acyl phosphate + H2O = a carboxylate + phosphate + H(+). The chain is Acylphosphatase (acyP) from Cupriavidus pinatubonensis (strain JMP 134 / LMG 1197) (Cupriavidus necator (strain JMP 134)).